Consider the following 137-residue polypeptide: Large ribosomal subunit protein uL16 (137 aa).

Belongs to the universal ribosomal protein uL16 family. In terms of assembly, part of the 50S ribosomal subunit.

Its function is as follows. Binds 23S rRNA and is also seen to make contacts with the A and possibly P site tRNAs. The protein is Large ribosomal subunit protein uL16 of Rhizobium rhizogenes (strain K84 / ATCC BAA-868) (Agrobacterium radiobacter).